We begin with the raw amino-acid sequence, 551 residues long: Rqc2 homolog RqcH (551 aa).

A required for fibronectin binding region spans residues 363 to 551; it reads YQKLKEAVKY…SKKIASMKKS (189 aa).

It belongs to the NEMF family. As to quaternary structure, associates with stalled 50S ribosomal subunits, binds to RqcP. Interacts with human fibronectin.

Its subcellular location is the cell surface. The protein resides in the cytoplasm. In terms of biological role, key component of the ribosome quality control system (RQC), a ribosome-associated complex that mediates the extraction of incompletely synthesized nascent chains from stalled ribosomes and their subsequent degradation. RqcH recruits Ala-charged tRNA, and with RqcP directs the elongation of stalled nascent chains on 50S ribosomal subunits, leading to non-templated C-terminal alanine extensions (Ala tail). The Ala tail promotes nascent chain degradation. May add between 1 and at least 8 Ala residues. Binds to stalled 50S ribosomal subunits. Recombinant protein binds to immobilized human fibronectin; binding is saturable and competed by heparin. Recombinant protein inhibits binding of whole cells to fibronectin. The chain is Rqc2 homolog RqcH from Streptococcus pneumoniae (strain ATCC BAA-255 / R6).